The primary structure comprises 82 residues: Penaeidin-3i (82 aa).

The first 19 residues, 1 to 19 (MRLVVCLVFLASFALVCQG), serve as a signal peptide directing secretion. Gln20 carries the post-translational modification Pyrrolidone carboxylic acid. Intrachain disulfides connect Cys55–Cys73 and Cys67–Cys74. Ser81 carries the serine amide modification.

Belongs to the penaeidin family.

The protein localises to the cytoplasmic granule. Its function is as follows. Antibacterial and antifungal activity. Presents chitin-binding activity. This chain is Penaeidin-3i, found in Penaeus vannamei (Whiteleg shrimp).